The sequence spans 141 residues: Hemoglobin subunit alpha (141 aa).

Positions 1 to 141 (VLSSADKANI…VSTVLTSKYR (141 aa)) constitute a Globin domain. A Phosphoserine modification is found at Ser-3. N6-succinyllysine is present on residues Lys-7 and Lys-11. Lys-16 carries the post-translational modification N6-acetyllysine; alternate. Lys-16 is modified (N6-succinyllysine; alternate). Position 24 is a phosphotyrosine (Tyr-24). Lys-40 is subject to N6-succinyllysine. Ser-49 carries the phosphoserine modification. His-58 provides a ligand contact to O2. His-87 is a binding site for heme b. The residue at position 102 (Ser-102) is a Phosphoserine. The residue at position 108 (Thr-108) is a Phosphothreonine. Phosphoserine is present on Ser-131. Residues Thr-134 and Thr-137 each carry the phosphothreonine modification. Ser-138 is modified (phosphoserine).

This sequence belongs to the globin family. As to quaternary structure, heterotetramer of two alpha chains and two beta chains. In terms of tissue distribution, red blood cells.

In terms of biological role, involved in oxygen transport from the lung to the various peripheral tissues. Hemopressin acts as an antagonist peptide of the cannabinoid receptor CNR1. Hemopressin-binding efficiently blocks cannabinoid receptor CNR1 and subsequent signaling. This chain is Hemoglobin subunit alpha (HBA), found in Crocuta crocuta (Spotted hyena).